The following is a 131-amino-acid chain: Small ribosomal subunit protein uS8 (131 aa).

This sequence belongs to the universal ribosomal protein uS8 family. Part of the 30S ribosomal subunit. Contacts proteins S5 and S12.

In terms of biological role, one of the primary rRNA binding proteins, it binds directly to 16S rRNA central domain where it helps coordinate assembly of the platform of the 30S subunit. This Methylococcus capsulatus (strain ATCC 33009 / NCIMB 11132 / Bath) protein is Small ribosomal subunit protein uS8.